Here is a 461-residue protein sequence, read N- to C-terminus: Kremen protein 2 (461 aa).

Residues 1–24 (MGTPHLQGFLLLFPLLLRLHGASA) form the signal peptide. The Extracellular segment spans residues 25–363 (GSLHSPGLSE…SPKPGAAQAS (339 aa)). A Kringle domain is found at 34-118 (ECFQVNGADY…YWRYCDIPTC (85 aa)). 3 disulfide bridges follow: C35-C118, C59-C99, and C88-C113. N48 carries N-linked (GlcNAc...) asparagine glycosylation. The region spanning 120 to 214 (MPGYLGCFVD…DGRLGIYEVS (95 aa)) is the WSC domain. A disulfide bridge connects residues C218 and C244. In terms of domain architecture, CUB spans 218–325 (CQGNWSAPQG…QGFALTYRGL (108 aa)). Residues N221, N243, and N350 are each glycosylated (N-linked (GlcNAc...) asparagine). Residues 329 to 357 (VEGRASPEDSTESLAGDPDGANASCSPKP) are disordered. Residues 364-386 (IGARVFSTVTAFSVLLLLLLSLL) traverse the membrane as a helical segment. Residues 387–461 (RLLRRRSCLL…SSLRSLVSAL (75 aa)) lie on the Cytoplasmic side of the membrane. The interval 429–452 (CPPGDSQAEGPAAGYRPLSASSQS) is disordered.

Interacts with ERLEC1. Forms a ternary complex with DKK1 and LRP6.

It is found in the membrane. Receptor for Dickkopf proteins. Cooperates with DKK1/2 to inhibit Wnt/beta-catenin signaling by promoting the endocytosis of Wnt receptors LRP5 and LRP6. Plays a role in limb development; attenuates Wnt signaling in the developing limb to allow normal limb patterning and can also negatively regulate bone formation. The chain is Kremen protein 2 (Kremen2) from Mus musculus (Mouse).